The sequence spans 401 residues: Imidazolonepropionase (401 aa).

Fe(3+)-binding residues include histidine 70 and histidine 72. The Zn(2+) site is built by histidine 70 and histidine 72. The 4-imidazolone-5-propanoate site is built by arginine 79, tyrosine 142, and histidine 175. Tyrosine 142 provides a ligand contact to N-formimidoyl-L-glutamate. Histidine 240 contacts Fe(3+). Histidine 240 is a binding site for Zn(2+). Glutamine 243 is a 4-imidazolone-5-propanoate binding site. Fe(3+) is bound at residue aspartate 315. Aspartate 315 contacts Zn(2+). Asparagine 317 and glycine 319 together coordinate N-formimidoyl-L-glutamate. A 4-imidazolone-5-propanoate-binding site is contributed by threonine 320.

This sequence belongs to the metallo-dependent hydrolases superfamily. HutI family. Requires Zn(2+) as cofactor. Fe(3+) is required as a cofactor.

The protein localises to the cytoplasm. The catalysed reaction is 4-imidazolone-5-propanoate + H2O = N-formimidoyl-L-glutamate. Its pathway is amino-acid degradation; L-histidine degradation into L-glutamate; N-formimidoyl-L-glutamate from L-histidine: step 3/3. Functionally, catalyzes the hydrolytic cleavage of the carbon-nitrogen bond in imidazolone-5-propanoate to yield N-formimidoyl-L-glutamate. It is the third step in the universal histidine degradation pathway. This is Imidazolonepropionase from Caulobacter vibrioides (strain ATCC 19089 / CIP 103742 / CB 15) (Caulobacter crescentus).